The sequence spans 145 residues: Probable transport accessory protein MmpS2 (145 aa).

Residues 11 to 31 (MWLLLAIVVVAVVGGLGIYRL) traverse the membrane as a helical segment.

This sequence belongs to the MmpS family.

Its subcellular location is the cell membrane. The sequence is that of Probable transport accessory protein MmpS2 (mmpS2) from Mycobacterium bovis (strain ATCC BAA-935 / AF2122/97).